The primary structure comprises 250 residues: Phosphoribosylaminoimidazole-succinocarboxamide synthase (250 aa).

This sequence belongs to the SAICAR synthetase family.

It carries out the reaction 5-amino-1-(5-phospho-D-ribosyl)imidazole-4-carboxylate + L-aspartate + ATP = (2S)-2-[5-amino-1-(5-phospho-beta-D-ribosyl)imidazole-4-carboxamido]succinate + ADP + phosphate + 2 H(+). It participates in purine metabolism; IMP biosynthesis via de novo pathway; 5-amino-1-(5-phospho-D-ribosyl)imidazole-4-carboxamide from 5-amino-1-(5-phospho-D-ribosyl)imidazole-4-carboxylate: step 1/2. This chain is Phosphoribosylaminoimidazole-succinocarboxamide synthase, found in Synechococcus sp. (strain WH7803).